A 467-amino-acid chain; its full sequence is Methylenetetrahydrofolate--tRNA-(uracil-5-)-methyltransferase TrmFO (467 aa).

10–15 (GAGLAG) contributes to the FAD binding site.

Belongs to the MnmG family. TrmFO subfamily. FAD serves as cofactor.

It is found in the cytoplasm. The catalysed reaction is uridine(54) in tRNA + (6R)-5,10-methylene-5,6,7,8-tetrahydrofolate + NADH + H(+) = 5-methyluridine(54) in tRNA + (6S)-5,6,7,8-tetrahydrofolate + NAD(+). The enzyme catalyses uridine(54) in tRNA + (6R)-5,10-methylene-5,6,7,8-tetrahydrofolate + NADPH + H(+) = 5-methyluridine(54) in tRNA + (6S)-5,6,7,8-tetrahydrofolate + NADP(+). In terms of biological role, catalyzes the folate-dependent formation of 5-methyl-uridine at position 54 (M-5-U54) in all tRNAs. The chain is Methylenetetrahydrofolate--tRNA-(uracil-5-)-methyltransferase TrmFO from Prochlorococcus marinus (strain MIT 9515).